The primary structure comprises 207 residues: Inner membrane-spanning protein YciB (207 aa).

The next 6 helical transmembrane spans lie at 3 to 23 (FLFD…AEGQ), 51 to 71 (VLLA…WLLL), 78 to 98 (TMLW…VWFH), 105 to 125 (WKPS…HAVF), 150 to 170 (FMWI…AYSF), and 178 to 198 (FKLF…GLYL).

Belongs to the YciB family.

The protein localises to the cell inner membrane. In terms of biological role, plays a role in cell envelope biogenesis, maintenance of cell envelope integrity and membrane homeostasis. The protein is Inner membrane-spanning protein YciB of Methylibium petroleiphilum (strain ATCC BAA-1232 / LMG 22953 / PM1).